A 572-amino-acid polypeptide reads, in one-letter code: Proline--tRNA ligase (572 aa).

Belongs to the class-II aminoacyl-tRNA synthetase family. ProS type 1 subfamily. As to quaternary structure, homodimer.

Its subcellular location is the cytoplasm. The catalysed reaction is tRNA(Pro) + L-proline + ATP = L-prolyl-tRNA(Pro) + AMP + diphosphate. In terms of biological role, catalyzes the attachment of proline to tRNA(Pro) in a two-step reaction: proline is first activated by ATP to form Pro-AMP and then transferred to the acceptor end of tRNA(Pro). As ProRS can inadvertently accommodate and process non-cognate amino acids such as alanine and cysteine, to avoid such errors it has two additional distinct editing activities against alanine. One activity is designated as 'pretransfer' editing and involves the tRNA(Pro)-independent hydrolysis of activated Ala-AMP. The other activity is designated 'posttransfer' editing and involves deacylation of mischarged Ala-tRNA(Pro). The misacylated Cys-tRNA(Pro) is not edited by ProRS. This Salmonella choleraesuis (strain SC-B67) protein is Proline--tRNA ligase.